Here is a 241-residue protein sequence, read N- to C-terminus: Uracil-DNA glycosylase (241 aa).

The active-site Proton acceptor is Asp71. Residues 221–241 form a disordered region; it reads ISPIDWSLPPRNELDTTSAGA.

It belongs to the uracil-DNA glycosylase (UDG) superfamily. UNG family.

The protein resides in the cytoplasm. The catalysed reaction is Hydrolyzes single-stranded DNA or mismatched double-stranded DNA and polynucleotides, releasing free uracil.. Functionally, excises uracil residues from the DNA which can arise as a result of misincorporation of dUMP residues by DNA polymerase or due to deamination of cytosine. The polypeptide is Uracil-DNA glycosylase (Xanthomonas oryzae pv. oryzae (strain MAFF 311018)).